A 444-amino-acid polypeptide reads, in one-letter code: Inward rectifier potassium channel 4 (444 aa).

Residues 1-55 (MHGHNRNGQAHVPRRKRRNRFVKKNGQCNVYFANLSNKSQRYMADIFTTCVDTRW) are Cytoplasmic-facing. The helical transmembrane segment at 56-80 (RYMLMLFSAAFLVSWLFFGLLFWCI) threads the bilayer. At 81–119 (AFFHGDLEASPSVPAAGAPGGNGGAAPAAPKPCIMHVNG) the chain is on the extracellular side. Positions 120–131 (FLGAFLFSVETQ) form an intramembrane region, helical; Pore-forming. An intramembrane region (pore-forming) is located at residues 132 to 138 (TTIGYGF). The short motif at 133 to 138 (TIGYGF) is the Selectivity filter element. Residues 139–147 (RCVTEECPL) lie on the Extracellular side of the membrane. A helical transmembrane segment spans residues 148–169 (AVIAVVVQSIVGCVIDSFMIGT). Topologically, residues 170-444 (IMAKMARPKK…NISYRRESAI (275 aa)) are cytoplasmic. A PDZ-binding motif is present at residues 442–444 (SAI).

Belongs to the inward rectifier-type potassium channel (TC 1.A.2.1) family. KCNJ4 subfamily. As to quaternary structure, homomultimeric and heteromultimeric association with KCNJ2 and KCNJ12. Interacts with DLG2 and DLG4. Associates, via its PDZ-recognition domain, with a complex containing LIN7A, LIN7B, LIN7C, DLG1, CASK and APBA1. Interacts with TAX1BP3. TAX1BP3 competes with LIN7 family members for KCNJ4 binding.

It is found in the cell membrane. The protein resides in the postsynaptic cell membrane. The protein localises to the cytoplasmic vesicle membrane. It catalyses the reaction K(+)(in) = K(+)(out). Inward rectifier potassium channels are characterized by a greater tendency to allow potassium to flow into the cell rather than out of it. Their voltage dependence is regulated by the concentration of extracellular potassium; as external potassium is raised, the voltage range of the channel opening shifts to more positive voltages. The inward rectification is mainly due to the blockage of outward current by internal magnesium. Can be blocked by extracellular barium and cesium. The sequence is that of Inward rectifier potassium channel 4 (KCNJ4) from Mesocricetus auratus (Golden hamster).